The chain runs to 822 residues: Cadherin-3 (822 aa).

Residues 1-25 (MELLSGPHAFLLLLLQVCWLRSVVS) form the signal peptide. Positions 26 to 99 (EPYRAGFIGE…PTRILRRRKR (74 aa)) are excised as a propeptide. Cadherin domains are found at residues 100 to 207 (EWVM…KPKF), 208 to 320 (TQDT…APEF), 321 to 432 (EPQK…APVF), 433 to 538 (VPPS…DHGP), and 539 to 645 (IPEP…RPWK). Over 100 to 647 (EWVMPPIFVP…NDCPRPWKGG (548 aa)) the chain is Extracellular. A glycan (N-linked (GlcNAc...) asparagine) is linked at Asn-192. Residue Asn-558 is glycosylated (N-linked (GlcNAc...) asparagine). Residues 648-670 (FILPILGAVLALLTLLLALLLLV) traverse the membrane as a helical segment. At 671–822 (RKKRKVKEPL…ADMYGGGEDD (152 aa)) the chain is on the cytoplasmic side.

In terms of assembly, interacts with CDCP1 and CTNNB1.

The protein resides in the cell membrane. Cadherins are calcium-dependent cell adhesion proteins. They preferentially interact with themselves in a homophilic manner in connecting cells; cadherins may thus contribute to the sorting of heterogeneous cell types. The sequence is that of Cadherin-3 (Cdh3) from Mus musculus (Mouse).